Here is a 189-residue protein sequence, read N- to C-terminus: Glycerol-3-phosphate acyltransferase (189 aa).

Helical transmembrane passes span 1–21 (MVWL…AVLL), 50–70 (KLAI…VLVA), 72–92 (WLGL…IGHL), 111–131 (MLLG…LLTF), and 151–171 (LLAW…ALIV).

The protein belongs to the PlsY family. In terms of assembly, probably interacts with PlsX.

The protein resides in the cell inner membrane. The enzyme catalyses an acyl phosphate + sn-glycerol 3-phosphate = a 1-acyl-sn-glycero-3-phosphate + phosphate. It participates in lipid metabolism; phospholipid metabolism. Functionally, catalyzes the transfer of an acyl group from acyl-phosphate (acyl-PO(4)) to glycerol-3-phosphate (G3P) to form lysophosphatidic acid (LPA). This enzyme utilizes acyl-phosphate as fatty acyl donor, but not acyl-CoA or acyl-ACP. The chain is Glycerol-3-phosphate acyltransferase from Pseudomonas paraeruginosa (strain DSM 24068 / PA7) (Pseudomonas aeruginosa (strain PA7)).